Here is a 1174-residue protein sequence, read N- to C-terminus: Probable pyruvate-flavodoxin oxidoreductase (1174 aa).

4Fe-4S ferredoxin-type domains follow at residues 680 to 709 and 736 to 765; these read EIPI…AKVV and YVLQ…NPEI. Residues Cys689, Cys692, Cys695, Cys699, Cys745, Cys748, Cys751, Cys755, Cys819, Cys822, Cys847, and Cys1071 each coordinate [4Fe-4S] cluster.

This sequence belongs to the pyruvate:ferredoxin/flavodoxin oxidoreductase family. The cofactor is [4Fe-4S] cluster.

The catalysed reaction is oxidized [flavodoxin] + pyruvate + CoA + 2 H(+) = reduced [flavodoxin] + acetyl-CoA + CO2. Its function is as follows. Oxidoreductase required for the transfer of electrons from pyruvate to flavodoxin. This chain is Probable pyruvate-flavodoxin oxidoreductase (ydbK), found in Escherichia coli (strain K12).